The sequence spans 354 residues: Chorismate synthase (354 aa).

Arginine 48 is an NADP(+) binding site. Residues 125-127 (RAS), glycine 277, 292-296 (KPIPS), and arginine 318 each bind FMN.

This sequence belongs to the chorismate synthase family. As to quaternary structure, homotetramer. Requires FMNH2 as cofactor.

It carries out the reaction 5-O-(1-carboxyvinyl)-3-phosphoshikimate = chorismate + phosphate. It functions in the pathway metabolic intermediate biosynthesis; chorismate biosynthesis; chorismate from D-erythrose 4-phosphate and phosphoenolpyruvate: step 7/7. Its function is as follows. Catalyzes the anti-1,4-elimination of the C-3 phosphate and the C-6 proR hydrogen from 5-enolpyruvylshikimate-3-phosphate (EPSP) to yield chorismate, which is the branch point compound that serves as the starting substrate for the three terminal pathways of aromatic amino acid biosynthesis. This reaction introduces a second double bond into the aromatic ring system. This Nitratidesulfovibrio vulgaris (strain DP4) (Desulfovibrio vulgaris) protein is Chorismate synthase.